We begin with the raw amino-acid sequence, 477 residues long: Iroquois homeobox protein 6a (477 aa).

The homeobox DNA-binding region spans 148–210 (GSTRRKNATR…NARRRLKKEN (63 aa)). Disordered stretches follow at residues 209–282 (ENKM…PDIP) and 303–323 (DYLDHLGSKPQQQQPSPQSTS). Over residues 219–237 (KAGDDRKEDLDSKDSKDEQ) the composition is skewed to basic and acidic residues. The span at 243–253 (DLDDMEDEDCD) shows a compositional bias: acidic residues. Over residues 254 to 264 (KLDSDCEKSGQ) the composition is skewed to basic and acidic residues. Residues 310-321 (SKPQQQQPSPQS) show a composition bias toward low complexity.

This sequence belongs to the TALE/IRO homeobox family.

The protein resides in the nucleus. Transcription factor. Binds to the iroquois binding site (IBS) motif of target genes to regulate gene expression; functions as a transcriptional activator or repressor. In concert with irx5a, plays a role in visual performance. The polypeptide is Iroquois homeobox protein 6a (Danio rerio (Zebrafish)).